The chain runs to 230 residues: Fibrillarin-like rRNA/tRNA 2'-O-methyltransferase (230 aa).

S-adenosyl-L-methionine-binding positions include threonine 89–threonine 90, glutamate 107–valine 108, aspartate 132–alanine 133, and aspartate 152–glutamine 155.

This sequence belongs to the methyltransferase superfamily. Fibrillarin family. As to quaternary structure, interacts with nop5. Component of box C/D small ribonucleoprotein (sRNP) particles that contain rpl7ae, FlpA and nop5, plus a guide RNA.

Its function is as follows. Involved in pre-rRNA and tRNA processing. Utilizes the methyl donor S-adenosyl-L-methionine to catalyze the site-specific 2'-hydroxyl methylation of ribose moieties in rRNA and tRNA. Site specificity is provided by a guide RNA that base pairs with the substrate. Methylation occurs at a characteristic distance from the sequence involved in base pairing with the guide RNA. This chain is Fibrillarin-like rRNA/tRNA 2'-O-methyltransferase, found in Thermoplasma acidophilum (strain ATCC 25905 / DSM 1728 / JCM 9062 / NBRC 15155 / AMRC-C165).